The primary structure comprises 472 residues: MSHQSELIAQDINAYLAQHEKKELLRFLTCGSVDDGKSTLIGRLLHDSKMIYEDQLEAVRADSSKHGTTGEKIDLALLVDGLQAEREQGITIDVAYRYFSTSKRKFIIADTPGHEQYTRNMATGASTCDLAIILIDARHGVMTQTRRHSYIASLLGIKHIVVAINKMDLLDFNESVFENIKADYLAFAAKLGMKDVMFVPISALDGDNVVNRSEKSAWYKGQTLMEILETVPIAGDKNYTDFRFPVQYVNRPNLDFRGFCGNVASGVVKVGDEVRVLPSGKTSHVKSIVTYDANLDEAFTGQAVTLTLTDEVDISRGDMLVLARDQVPQSNHVRAHLVWMTEKFMQPGSEYLFKFASKLVSGQIESIGYRVDVNTQEHSQVTHLQLNDIALVDVLLTQSVVADKYQQNRATGAFIVVDRLTNITVGAGMVVEQLQAEQTTPVNYSEFELELNALVRKHFPHWGAADLRKLLK.

In terms of domain architecture, tr-type G spans Lys22–Tyr239. The segment at Gly31–Ser38 is G1. A GTP-binding site is contributed by Gly31–Ser38. The interval Gly89–Asp93 is G2. The tract at residues Asp110–Gly113 is G3. Residues Asp110–His114 and Asn165–Asp168 each bind GTP. Positions Asn165 to Asp168 are G4. The segment at Ser202–Leu204 is G5.

It belongs to the TRAFAC class translation factor GTPase superfamily. Classic translation factor GTPase family. CysN/NodQ subfamily. As to quaternary structure, heterodimer composed of CysD, the smaller subunit, and CysN.

It catalyses the reaction sulfate + ATP + H(+) = adenosine 5'-phosphosulfate + diphosphate. Its pathway is sulfur metabolism; hydrogen sulfide biosynthesis; sulfite from sulfate: step 1/3. With CysD forms the ATP sulfurylase (ATPS) that catalyzes the adenylation of sulfate producing adenosine 5'-phosphosulfate (APS) and diphosphate, the first enzymatic step in sulfur assimilation pathway. APS synthesis involves the formation of a high-energy phosphoric-sulfuric acid anhydride bond driven by GTP hydrolysis by CysN coupled to ATP hydrolysis by CysD. The sequence is that of Sulfate adenylyltransferase subunit 1 from Cellvibrio japonicus (strain Ueda107) (Pseudomonas fluorescens subsp. cellulosa).